The primary structure comprises 246 residues: C-X-C motif chemokine 16 (246 aa).

The first 26 residues, 1-26, serve as a signal peptide directing secretion; sequence MRRGFGPLSLAFFLFLLALLTLPGDG. The Extracellular segment spans residues 27–201; the sequence is NQGSVAGSCS…PGAGASTPAW (175 aa). 2 cysteine pairs are disulfide-bonded: Cys-35–Cys-65 and Cys-37–Cys-79. Disordered stretches follow at residues 104-150 and 175-198; these read GKSF…SGAL and PEAEANEKQQDDRQQEAPGAGAST. The span at 128 to 146 shows a compositional bias: polar residues; sequence PSDTSTPAHSQSTQHSTLP. Positions 175 to 189 are enriched in basic and acidic residues; sequence PEAEANEKQQDDRQQ. The helical transmembrane segment at 202–222 threads the bilayer; sequence VPVLSLLAIVFFLTAAMAYVL. The Cytoplasmic portion of the chain corresponds to 223 to 246; the sequence is CNRRATQQNSAGLQLWYTPVEPRP.

Belongs to the intercrine alpha (chemokine CxC) family. Post-translationally, glycosylated. Widely expressed. Not detected in purified B- and T-cells.

The protein localises to the membrane. Induces a strong chemotactic response. Induces calcium mobilization. Binds to CXCR6/Bonzo. Also acts as a scavenger receptor on macrophages, which specifically binds to OxLDL (oxidized low density lipoprotein), suggesting that it may be involved in pathophysiology such as atherogenesis. In Mus musculus (Mouse), this protein is C-X-C motif chemokine 16 (Cxcl16).